A 717-amino-acid chain; its full sequence is Eukaryotic translation initiation factor 3 subunit B (717 aa).

Residues 1–89 are sufficient for interaction with HCR1 and TIF32; the sequence is MTVEDNLDID…VFIEYETGEM (89 aa). Residues 1 to 216 are sufficient for interaction with PIC8; sequence MTVEDNLDID…GVQLWGGPDW (216 aa). Residues 28–115 form the RRM domain; it reads SFIVVDGAPV…HKLLVNKLSE (88 aa). 6 WD repeats span residues 183–221, 223–284, 293–332, 445–484, 506–549, and 564–609; these read RERW…PPIC, FQHP…PVRT, GASM…LLDK, ELKD…NRHT, FDKK…DRKH, and SEHY…QREE.

This sequence belongs to the eIF-3 subunit B family. As to quaternary structure, component of the eukaryotic translation initiation factor 3 (eIF-3) complex.

Its subcellular location is the cytoplasm. Its function is as follows. RNA-binding component of the eukaryotic translation initiation factor 3 (eIF-3) complex, which is involved in protein synthesis of a specialized repertoire of mRNAs and, together with other initiation factors, stimulates binding of mRNA and methionyl-tRNAi to the 40S ribosome. The eIF-3 complex specifically targets and initiates translation of a subset of mRNAs involved in cell proliferation. The protein is Eukaryotic translation initiation factor 3 subunit B of Yarrowia lipolytica (strain CLIB 122 / E 150) (Yeast).